We begin with the raw amino-acid sequence, 194 residues long: Leucyl/phenylalanyl-tRNA--protein transferase (194 aa).

Belongs to the L/F-transferase family.

Its subcellular location is the cytoplasm. The catalysed reaction is N-terminal L-lysyl-[protein] + L-leucyl-tRNA(Leu) = N-terminal L-leucyl-L-lysyl-[protein] + tRNA(Leu) + H(+). The enzyme catalyses N-terminal L-arginyl-[protein] + L-leucyl-tRNA(Leu) = N-terminal L-leucyl-L-arginyl-[protein] + tRNA(Leu) + H(+). It carries out the reaction L-phenylalanyl-tRNA(Phe) + an N-terminal L-alpha-aminoacyl-[protein] = an N-terminal L-phenylalanyl-L-alpha-aminoacyl-[protein] + tRNA(Phe). Functionally, functions in the N-end rule pathway of protein degradation where it conjugates Leu, Phe and, less efficiently, Met from aminoacyl-tRNAs to the N-termini of proteins containing an N-terminal arginine or lysine. This is Leucyl/phenylalanyl-tRNA--protein transferase from Pelodictyon phaeoclathratiforme (strain DSM 5477 / BU-1).